The primary structure comprises 491 residues: Iota-carrageenase (491 aa).

The signal sequence occupies residues 1 to 23 (MRLYFRKLWLTNLFLGGALASSA). 4 cysteine pairs are disulfide-bonded: cysteine 269–cysteine 298, cysteine 336–cysteine 360, cysteine 408–cysteine 476, and cysteine 412–cysteine 484.

It belongs to the glycosyl hydrolase 82 family.

It localises to the secreted. The catalysed reaction is Endohydrolysis of 1,4-beta-D-linkages between D-galactose 4-sulfate and 3,6-anhydro-D-galactose-2-sulfate in iota-carrageenans.. In terms of biological role, hydrolyzes iota-carrageenans, sulfated 1,3-alpha-1,4-beta galactans from red algal cell walls, with an inversion of anomeric configuration. Also active against hybrid iota-/nu-carrageenan, not active against kappa- or lambda-carrageenans. The chain is Iota-carrageenase from Alteromonas macleodii (Pseudoalteromonas macleodii).